The following is a 152-amino-acid chain: AIG2-like protein D (152 aa).

13–18 (YGSLMA) provides a ligand contact to substrate. Glutamate 81 serves as the catalytic Proton acceptor.

This sequence belongs to the gamma-glutamylcyclotransferase family. Expressed mainly in leaves.

Putative gamma-glutamylcyclotransferase. The sequence is that of AIG2-like protein D from Arabidopsis thaliana (Mouse-ear cress).